Consider the following 246-residue polypeptide: tRNA (guanine-N(7)-)-methyltransferase (246 aa).

The S-adenosyl-L-methionine site is built by E77, E102, D129, and D152. Residue D152 is part of the active site. Substrate-binding positions include K156, D188, and 225 to 228 (TKFE).

This sequence belongs to the class I-like SAM-binding methyltransferase superfamily. TrmB family.

It carries out the reaction guanosine(46) in tRNA + S-adenosyl-L-methionine = N(7)-methylguanosine(46) in tRNA + S-adenosyl-L-homocysteine. The protein operates within tRNA modification; N(7)-methylguanine-tRNA biosynthesis. Functionally, catalyzes the formation of N(7)-methylguanine at position 46 (m7G46) in tRNA. The polypeptide is tRNA (guanine-N(7)-)-methyltransferase (Haemophilus influenzae (strain ATCC 51907 / DSM 11121 / KW20 / Rd)).